Consider the following 430-residue polypeptide: Probable carboxypeptidase AFLA_037450 (430 aa).

A signal peptide spans 1–16 (MKSIYSLVLCTALTAA). N-linked (GlcNAc...) asparagine glycosylation is present at asparagine 84. Residue aspartate 156 coordinates Zn(2+). The Proton acceptor role is filled by glutamate 188. Glutamate 189 is a Zn(2+) binding site. Asparagine 285 is a glycosylation site (N-linked (GlcNAc...) asparagine).

The protein belongs to the peptidase M20A family. Requires Zn(2+) as cofactor.

The protein resides in the secreted. This chain is Probable carboxypeptidase AFLA_037450, found in Aspergillus flavus (strain ATCC 200026 / FGSC A1120 / IAM 13836 / NRRL 3357 / JCM 12722 / SRRC 167).